The following is a 154-amino-acid chain: Transcriptional repressor NrdR (154 aa).

The segment at 3–34 (CPFCGANDTKVIDSRLVAEGEQVRRRRECVAC) is a zinc-finger region. Residues 49 to 139 (PRLIKQDGTR…VYRRFQDLDE (91 aa)) form the ATP-cone domain.

This sequence belongs to the NrdR family. Zn(2+) is required as a cofactor.

Its function is as follows. Negatively regulates transcription of bacterial ribonucleotide reductase nrd genes and operons by binding to NrdR-boxes. The protein is Transcriptional repressor NrdR of Pseudomonas putida (strain ATCC 700007 / DSM 6899 / JCM 31910 / BCRC 17059 / LMG 24140 / F1).